The sequence spans 278 residues: Pantothenate synthetase (278 aa).

ATP is bound at residue 27-34; it reads MGYLHEGH. Catalysis depends on H34, which acts as the Proton donor. Position 58 (Q58) interacts with (R)-pantoate. Q58 is a beta-alanine binding site. ATP is bound at residue 144 to 147; that stretch reads GQKD. A (R)-pantoate-binding site is contributed by Q150. ATP-binding positions include V173 and 181-184; that span reads MSSR.

Belongs to the pantothenate synthetase family. As to quaternary structure, homodimer.

The protein localises to the cytoplasm. The catalysed reaction is (R)-pantoate + beta-alanine + ATP = (R)-pantothenate + AMP + diphosphate + H(+). It participates in cofactor biosynthesis; (R)-pantothenate biosynthesis; (R)-pantothenate from (R)-pantoate and beta-alanine: step 1/1. Catalyzes the condensation of pantoate with beta-alanine in an ATP-dependent reaction via a pantoyl-adenylate intermediate. The polypeptide is Pantothenate synthetase (Roseiflexus sp. (strain RS-1)).